We begin with the raw amino-acid sequence, 678 residues long: Putative pentatricopeptide repeat-containing protein At3g18840 (678 aa).

PPR repeat units follow at residues 22–56 (TAVS…NVYS), 57–84 (WNAV…NCER), 85–116 (DLIT…MHRK), 124–158 (DDFT…GNDG), 159–190 (TKFA…CVEF), 192–222 (DSVA…NPEL), 224–258 (DTIS…GLKW), 259–293 (DEHS…GSYS), 294–324 (NKFV…YGFG), 325–359 (NLYS…NLVV), 360–390 (WTAM…ETNT), 392–426 (DSLV…GILM), 427–457 (DKKL…SFER), 458–492 (DTVM…GFKP), 493–528 (DEIT…NISP), and 529–563 (ETGH…EKDA). Positions 565–640 (ILGAFLNACS…FSGCSWANID (76 aa)) are type E motif. The segment at 641–671 (KQFHMFTSSDISHYETEAIYAMLHFVTKDLS) is type E(+) motif.

The protein belongs to the PPR family. PCMP-E subfamily.

The sequence is that of Putative pentatricopeptide repeat-containing protein At3g18840 (PCMP-E92) from Arabidopsis thaliana (Mouse-ear cress).